A 232-amino-acid chain; its full sequence is Large ribosomal subunit protein uL1 (232 aa).

It belongs to the universal ribosomal protein uL1 family. As to quaternary structure, part of the 50S ribosomal subunit.

Functionally, binds directly to 23S rRNA. The L1 stalk is quite mobile in the ribosome, and is involved in E site tRNA release. In terms of biological role, protein L1 is also a translational repressor protein, it controls the translation of the L11 operon by binding to its mRNA. In Levilactobacillus brevis (strain ATCC 367 / BCRC 12310 / CIP 105137 / JCM 1170 / LMG 11437 / NCIMB 947 / NCTC 947) (Lactobacillus brevis), this protein is Large ribosomal subunit protein uL1.